We begin with the raw amino-acid sequence, 294 residues long: Eukaryotic translation initiation factor 3 subunit G (294 aa).

Residues 1 to 22 (MQTFHHQDTGSEDFRQNTMDEK) are compositionally biased toward basic and acidic residues. Disordered regions lie at residues 1–42 (MQTF…DGTK) and 164–211 (GGMG…SDDD). Positions 30 to 42 (STPQITQNADGTK) are enriched in polar residues. Residues 193–205 (GPGGPGGPGGAAG) are compositionally biased toward gly residues. Positions 214-292 (LTLRVTNLSE…LIMKVDYSKK (79 aa)) constitute an RRM domain.

It belongs to the eIF-3 subunit G family. As to quaternary structure, component of the eukaryotic translation initiation factor 3 (eIF-3) complex.

Its subcellular location is the cytoplasm. Functionally, RNA-binding component of the eukaryotic translation initiation factor 3 (eIF-3) complex, which is involved in protein synthesis of a specialized repertoire of mRNAs and, together with other initiation factors, stimulates binding of mRNA and methionyl-tRNAi to the 40S ribosome. The eIF-3 complex specifically targets and initiates translation of a subset of mRNAs involved in cell proliferation. This subunit can bind 18S rRNA. The polypeptide is Eukaryotic translation initiation factor 3 subunit G (Yarrowia lipolytica (strain CLIB 122 / E 150) (Yeast)).